A 122-amino-acid chain; its full sequence is MEIQEISKLAIEALEDIKGKDIIELDTSKLTSLFQRMIVATGDSNRQVKALANSVQVKLKEAGVDIVGSEGHESGEWVLVDAGDVVVHVMLPAVRDYYDIEALWGGQKPSFAVGAAKPWSAV.

The protein belongs to the Iojap/RsfS family. Interacts with ribosomal protein uL14 (rplN).

It localises to the cytoplasm. Functions as a ribosomal silencing factor. Interacts with ribosomal protein uL14 (rplN), blocking formation of intersubunit bridge B8. Prevents association of the 30S and 50S ribosomal subunits and the formation of functional ribosomes, thus repressing translation. The polypeptide is Ribosomal silencing factor RsfS (Chromobacterium violaceum (strain ATCC 12472 / DSM 30191 / JCM 1249 / CCUG 213 / NBRC 12614 / NCIMB 9131 / NCTC 9757 / MK)).